We begin with the raw amino-acid sequence, 234 residues long: BTB/POZ domain-containing protein KCTD5 (234 aa).

A2 carries the post-translational modification N-acetylalanine. In terms of domain architecture, BTB spans 44–146; sequence KWVRLNVGGT…LVKDKIRERD (103 aa). The segment at 213–234 is disordered; it reads PYGTTSEPSEKAKILQERGSRM. Positions 220–234 are enriched in basic and acidic residues; that stretch reads PSEKAKILQERGSRM.

In terms of assembly, homopentamer. Interacts (via C-terminus) with GRASP55/GORASP2. Interacts with CUL3 and with ubiquitinated proteins. Interacts with CRY1.

The protein localises to the cytoplasm. Its subcellular location is the cytosol. It localises to the nucleus. Functionally, its interaction with CUL3 suggests that it may act as a substrate adapter in some E3 ligase complex. Does not affect the function of Kv channel Kv2.1/KCNB1, Kv1.2/KCNA2, Kv4.2/KCND2 and Kv3.4/KCNC4. The polypeptide is BTB/POZ domain-containing protein KCTD5 (Kctd5) (Mus musculus (Mouse)).